Here is a 442-residue protein sequence, read N- to C-terminus: tRNA modification GTPase MnmE (442 aa).

(6S)-5-formyl-5,6,7,8-tetrahydrofolate-binding residues include arginine 27, glutamate 84, and lysine 124. The 146-residue stretch at glycine 221–glutamate 366 folds into the TrmE-type G domain. Residues asparagine 231–serine 236, serine 250–threonine 256, and aspartate 275–glycine 278 contribute to the GTP site. Mg(2+) contacts are provided by serine 235 and threonine 256. Position 442 (lysine 442) interacts with (6S)-5-formyl-5,6,7,8-tetrahydrofolate.

It belongs to the TRAFAC class TrmE-Era-EngA-EngB-Septin-like GTPase superfamily. TrmE GTPase family. Homodimer. Heterotetramer of two MnmE and two MnmG subunits. K(+) serves as cofactor.

Its subcellular location is the cytoplasm. Functionally, exhibits a very high intrinsic GTPase hydrolysis rate. Involved in the addition of a carboxymethylaminomethyl (cmnm) group at the wobble position (U34) of certain tRNAs, forming tRNA-cmnm(5)s(2)U34. This is tRNA modification GTPase MnmE from Brucella canis (strain ATCC 23365 / NCTC 10854 / RM-666).